The chain runs to 286 residues: Transcription factor bHLH11 (286 aa).

A disordered region spans residues 1-34 (MDQPMKPKTCSESDFADDSSASSSSSSGQNLRGA). A compositionally biased stretch (low complexity) spans 18-27 (DSSASSSSSS). Residues 44 to 94 (AVCSQKAEREKLRRDKLKEQFLELGNALDPNRPKSDKASVLTDTIQMLKDV) form the bHLH domain. Disordered regions lie at residues 182–202 (EQQA…MKQD) and 244–286 (QQDV…MLKP). Composition is skewed to low complexity over residues 183 to 198 (QQAS…ADAS) and 255 to 269 (SLTT…YSLS). Residues 270–279 (QAVQDSSPGT) show a composition bias toward polar residues.

As to quaternary structure, homodimer. In terms of tissue distribution, expressed consitutively in roots, leaves, stems, and flowers.

It localises to the nucleus. The sequence is that of Transcription factor bHLH11 (BHLH11) from Arabidopsis thaliana (Mouse-ear cress).